A 325-amino-acid polypeptide reads, in one-letter code: Biotin synthase (325 aa).

A Radical SAM core domain is found at 49–278 (FNGNIVDLCS…KASIRLAGGR (230 aa)). [4Fe-4S] cluster-binding residues include Cys-67, Cys-71, and Cys-74. [2Fe-2S] cluster is bound by residues Ser-111, Cys-143, Cys-203, and Arg-273.

The protein belongs to the radical SAM superfamily. Biotin synthase family. Homodimer. The cofactor is [4Fe-4S] cluster. Requires [2Fe-2S] cluster as cofactor.

It catalyses the reaction (4R,5S)-dethiobiotin + (sulfur carrier)-SH + 2 reduced [2Fe-2S]-[ferredoxin] + 2 S-adenosyl-L-methionine = (sulfur carrier)-H + biotin + 2 5'-deoxyadenosine + 2 L-methionine + 2 oxidized [2Fe-2S]-[ferredoxin]. It functions in the pathway cofactor biosynthesis; biotin biosynthesis; biotin from 7,8-diaminononanoate: step 2/2. Its function is as follows. Catalyzes the conversion of dethiobiotin (DTB) to biotin by the insertion of a sulfur atom into dethiobiotin via a radical-based mechanism. This chain is Biotin synthase, found in Clostridium tetani (strain Massachusetts / E88).